Here is a 363-residue protein sequence, read N- to C-terminus: Cleavage and termination factor 1 (363 aa).

The region spanning 7-85 (NVVFVGNIPY…RKIRVEFPSN (79 aa)) is the RRM domain. The tract at residues 291–325 (QPASATSSPPSVPQKIPSSNHKSQQANGSDQGNEG) is disordered. Positions 306-322 (IPSSNHKSQQANGSDQG) are enriched in polar residues.

Interacts with res2.

The protein resides in the nucleus. Component of the cleavage factor I (CF I) involved in pre-mRNA 3'-end processing. In Schizosaccharomyces pombe (strain 972 / ATCC 24843) (Fission yeast), this protein is Cleavage and termination factor 1 (ctf1).